The following is a 252-amino-acid chain: uncharacterized protein (252 aa).

6 consecutive transmembrane segments (helical) span residues 5–25 (LTSL…IVSF), 29–49 (LALV…GTFI), 61–81 (IAGI…GLYF), 141–161 (ILPS…PGII), 179–199 (WLLL…SKWW), and 217–237 (IGWI…LIQF).

The protein belongs to the DedA family.

It localises to the cell membrane. This is an uncharacterized protein from Buchnera aphidicola subsp. Schizaphis graminum (strain Sg).